The chain runs to 259 residues: MLIVVSPAKTLDYETPLPTSAFTQPDFISDSAELIKACRTLTPVDIAKLMKVSDKIASLNAVRFEEWSTTFTQENARPALFAFKGDVYTGLDANSLSESEIEYAQTNLRMLSGLYGLLKPLDLMQPYRLEMGTKLENGRGSNLYQFWGSLITNKLNQELEAQGSETLVNLASNEYFKSVKPKELKADIVTPVFKDCKNGQYKIISFYAKKARGLMARFIIQNKISNVEELKSFDSDGYYFVEAESTATTLVFKREEQNK.

Belongs to the UPF0246 family.

The polypeptide is UPF0246 protein VF_2109 (Aliivibrio fischeri (strain ATCC 700601 / ES114) (Vibrio fischeri)).